Reading from the N-terminus, the 445-residue chain is Argininosuccinate synthase (445 aa).

Residues 17 to 25 (AFSGGLDTS) and Ala-43 contribute to the ATP site. L-citrulline is bound at residue Tyr-99. Positions 129 and 131 each coordinate ATP. Positions 131, 135, and 136 each coordinate L-aspartate. Position 135 (Asn-135) interacts with L-citrulline. Asp-136 contacts ATP. The L-citrulline site is built by Arg-139 and Ser-192. Asp-194 provides a ligand contact to ATP. Thr-201, Glu-203, and Glu-280 together coordinate L-citrulline.

Belongs to the argininosuccinate synthase family. Type 2 subfamily. In terms of assembly, homotetramer.

The protein resides in the cytoplasm. The catalysed reaction is L-citrulline + L-aspartate + ATP = 2-(N(omega)-L-arginino)succinate + AMP + diphosphate + H(+). It participates in amino-acid biosynthesis; L-arginine biosynthesis; L-arginine from L-ornithine and carbamoyl phosphate: step 2/3. The chain is Argininosuccinate synthase from Rhodopseudomonas palustris (strain BisB18).